A 67-amino-acid polypeptide reads, in one-letter code: ATP synthase F(0) complex subunit 8 (67 aa).

Residues 8–24 form a helical membrane-spanning segment; the sequence is TWLIMILSMILTLFITF. Lys-54 bears the N6-acetyllysine; alternate mark. An N6-succinyllysine; alternate modification is found at Lys-54. Lys-57 carries the post-translational modification N6-acetyllysine.

The protein belongs to the ATPase protein 8 family. Component of the ATP synthase complex composed at least of ATP5F1A/subunit alpha, ATP5F1B/subunit beta, ATP5MC1/subunit c (homooctomer), MT-ATP6/subunit a, MT-ATP8/subunit 8, ATP5ME/subunit e, ATP5MF/subunit f, ATP5MG/subunit g, ATP5MK/subunit k, ATP5MJ/subunit j, ATP5F1C/subunit gamma, ATP5F1D/subunit delta, ATP5F1E/subunit epsilon, ATP5PF/subunit F6, ATP5PB/subunit b, ATP5PD/subunit d, ATP5PO/subunit OSCP. ATP synthase complex consists of a soluble F(1) head domain (subunits alpha(3) and beta(3)) - the catalytic core - and a membrane F(0) domain - the membrane proton channel (subunits c, a, 8, e, f, g, k and j). These two domains are linked by a central stalk (subunits gamma, delta, and epsilon) rotating inside the F1 region and a stationary peripheral stalk (subunits F6, b, d, and OSCP). Interacts with PRICKLE3.

It is found in the mitochondrion membrane. Its function is as follows. Subunit 8, of the mitochondrial membrane ATP synthase complex (F(1)F(0) ATP synthase or Complex V) that produces ATP from ADP in the presence of a proton gradient across the membrane which is generated by electron transport complexes of the respiratory chain. ATP synthase complex consist of a soluble F(1) head domain - the catalytic core - and a membrane F(1) domain - the membrane proton channel. These two domains are linked by a central stalk rotating inside the F(1) region and a stationary peripheral stalk. During catalysis, ATP synthesis in the catalytic domain of F(1) is coupled via a rotary mechanism of the central stalk subunits to proton translocation. In vivo, can only synthesize ATP although its ATP hydrolase activity can be activated artificially in vitro. Part of the complex F(0) domain. This is ATP synthase F(0) complex subunit 8 from Phoca vitulina (Harbor seal).